The chain runs to 1039 residues: Probable inorganic carbon transporter subunit DabA 1 (1039 aa).

Positions 462, 464, 721, and 736 each coordinate Zn(2+).

Belongs to the inorganic carbon transporter (TC 9.A.2) DabA family. Forms a complex with DabB. The cofactor is Zn(2+).

Its subcellular location is the cell inner membrane. Its function is as follows. Part of an energy-coupled inorganic carbon pump. This Nitrobacter hamburgensis (strain DSM 10229 / NCIMB 13809 / X14) protein is Probable inorganic carbon transporter subunit DabA 1.